Reading from the N-terminus, the 467-residue chain is Dimethylamine methyltransferase MtbB3 (467 aa).

Pyrrolysine 356 is a non-standard amino acid (pyrrolysine).

The protein belongs to the dimethylamine methyltransferase family.

The catalysed reaction is Co(I)-[dimethylamine-specific corrinoid protein] + dimethylamine + H(+) = methyl-Co(III)-[dimethylamine-specific corrinoid protein] + methylamine. The protein operates within one-carbon metabolism; methanogenesis from dimethylamine. Its function is as follows. Catalyzes the transfer of a methyl group from dimethylamine to the corrinoid cofactor of MtbC. This is Dimethylamine methyltransferase MtbB3 (mtbB3) from Methanosarcina mazei (strain ATCC BAA-159 / DSM 3647 / Goe1 / Go1 / JCM 11833 / OCM 88) (Methanosarcina frisia).